Reading from the N-terminus, the 613-residue chain is Probable potassium transport system protein Kup 1 (613 aa).

The next 12 helical transmembrane spans lie at 40 to 60 (VLSMLFWSMTLVVSIKYVVFV), 93 to 113 (MLLGLLGASMFYGDAVITPAI), 127 to 147 (PALQPWVLPLSLIVLVGLFLL), 158 to 178 (LFGPVMLFWFVLLGLIGLFSV), 201 to 221 (AVQAFIVFGSVFLALTGAEAL), 237 to 257 (WFYIAMPCLLLNYFGQGALLL), 266 to 286 (PFFLLMPTWAVAPTIVLATAA), 288 to 308 (VIASQAVISGAFSMTAQAVHL), 327 to 347 (IYVPVVNYALLLLVVAVVLAF), 356 to 376 (AYGIAVTTTMLLTTGLVTVVM), 384 to 404 (LPAVALLGTVFLAVDLSFFGA), and 409 to 429 (VAAGGWFPLLLGGLIFFLMVT).

It belongs to the HAK/KUP transporter (TC 2.A.72) family.

The protein localises to the cell inner membrane. It carries out the reaction K(+)(in) + H(+)(in) = K(+)(out) + H(+)(out). In terms of biological role, transport of potassium into the cell. Likely operates as a K(+):H(+) symporter. The polypeptide is Probable potassium transport system protein Kup 1 (Ralstonia nicotianae (strain ATCC BAA-1114 / GMI1000) (Ralstonia solanacearum)).